The primary structure comprises 147 residues: Transcriptional regulator MraZ (147 aa).

2 consecutive SpoVT-AbrB domains span residues 5–52 and 81–124; these read SHAI…PETE and ATTL…SEEA.

The protein belongs to the MraZ family. Forms oligomers.

It is found in the cytoplasm. The protein localises to the nucleoid. The sequence is that of Transcriptional regulator MraZ from Saccharophagus degradans (strain 2-40 / ATCC 43961 / DSM 17024).